A 777-amino-acid chain; its full sequence is Aconitate hydratase, mitochondrial (777 aa).

Substrate-binding positions include Gln96 and 189–191 (DSH). [4Fe-4S] cluster contacts are provided by Cys383, Cys446, and Cys449. Substrate is bound by residues Arg472, Arg477, Arg605, and 668–669 (SR).

This sequence belongs to the aconitase/IPM isomerase family. As to quaternary structure, monomer. The cofactor is [4Fe-4S] cluster.

The protein localises to the mitochondrion. The enzyme catalyses citrate = D-threo-isocitrate. It participates in carbohydrate metabolism; tricarboxylic acid cycle; isocitrate from oxaloacetate: step 2/2. Its function is as follows. Catalyzes the isomerization of citrate to isocitrate via cis-aconitate, a step in the citric acid cycle. This is Aconitate hydratase, mitochondrial (ACO1) from Candida albicans (strain SC5314 / ATCC MYA-2876) (Yeast).